The chain runs to 480 residues: Cyclin L homolog cyl-1 (480 aa).

Positions Pro-25–Ser-58 are disordered. Residues Glu-33 to Ser-44 are compositionally biased toward basic and acidic residues. Polar residues predominate over residues Thr-45 to Ser-58. One can recognise a Cyclin N-terminal domain in the interval Pro-91 to Val-230. The disordered stretch occupies residues Lys-368–Arg-480. Composition is skewed to basic and acidic residues over residues Lys-384–Glu-409 and Asn-418–Lys-442. The segment covering Asp-443–Arg-453 has biased composition (basic residues). The span at Asp-454–Ser-472 shows a compositional bias: basic and acidic residues.

The protein belongs to the cyclin family.

Involved in pre-mRNA splicing. Functions in association with cyclin-dependent kinases (CDKs). Involved in induction of expression of heat shock protein hsp-16.2 in response to heat shock. Plays a role in male tail development, perhaps acting together with cell cycle regulators cdc-25.2, cdk-1, cyb-3, and cyd-1. This chain is Cyclin L homolog cyl-1, found in Caenorhabditis elegans.